The sequence spans 105 residues: MFAVIKTGGKQYRVAANDVLTIEKLEATAGDSIEFTEVLVIGEGADAAIGAPFVTGASVKAEVVEQNRGKKVIAFKKRRRQNSKRSRGHRQHHTVVRITDIVAAK.

It belongs to the bacterial ribosomal protein bL21 family. As to quaternary structure, part of the 50S ribosomal subunit. Contacts protein L20.

This protein binds to 23S rRNA in the presence of protein L20. This is Large ribosomal subunit protein bL21 from Rhizobium johnstonii (strain DSM 114642 / LMG 32736 / 3841) (Rhizobium leguminosarum bv. viciae).